The sequence spans 608 residues: Isocitrate dehydrogenase kinase/phosphatase (608 aa).

ATP contacts are provided by residues 327–333 and K348; that span reads APGIKGL. D383 is an active-site residue. The disordered stretch occupies residues 589–608; the sequence is FDSTPDAGDGDSAGDAQRAA.

It belongs to the AceK family.

It is found in the cytoplasm. The catalysed reaction is L-seryl-[isocitrate dehydrogenase] + ATP = O-phospho-L-seryl-[isocitrate dehydrogenase] + ADP + H(+). Its function is as follows. Bifunctional enzyme which can phosphorylate or dephosphorylate isocitrate dehydrogenase (IDH) on a specific serine residue. This is a regulatory mechanism which enables bacteria to bypass the Krebs cycle via the glyoxylate shunt in response to the source of carbon. When bacteria are grown on glucose, IDH is fully active and unphosphorylated, but when grown on acetate or ethanol, the activity of IDH declines drastically concomitant with its phosphorylation. The chain is Isocitrate dehydrogenase kinase/phosphatase from Burkholderia ambifaria (strain MC40-6).